A 61-amino-acid chain; its full sequence is Photosystem II reaction center protein Z (61 aa).

2 helical membrane passes run 8–28 and 41–61; these read ALLV…VLFS and LVGS…SFFK.

It belongs to the PsbZ family. As to quaternary structure, PSII is composed of 1 copy each of membrane proteins PsbA, PsbB, PsbC, PsbD, PsbE, PsbF, PsbH, PsbI, PsbJ, PsbK, PsbL, PsbM, PsbT, PsbX, PsbY, PsbZ, Psb30/Ycf12, peripheral proteins PsbO, CyanoQ (PsbQ), PsbU, PsbV and a large number of cofactors. It forms dimeric complexes.

The protein resides in the cellular thylakoid membrane. Its function is as follows. May control the interaction of photosystem II (PSII) cores with the light-harvesting antenna, regulates electron flow through the 2 photosystem reaction centers. PSII is a light-driven water plastoquinone oxidoreductase, using light energy to abstract electrons from H(2)O, generating a proton gradient subsequently used for ATP formation. The protein is Photosystem II reaction center protein Z of Synechococcus sp. (strain JA-3-3Ab) (Cyanobacteria bacterium Yellowstone A-Prime).